Here is a 250-residue protein sequence, read N- to C-terminus: uncharacterized protein (250 aa).

The disordered stretch occupies residues 182–205 (HTPIVSIQTPPPPAPTPNRPDVPA). The segment covering 190–201 (TPPPPAPTPNRP) has biased composition (pro residues). A helical transmembrane segment spans residues 230-250 (TRISVIPLLSVLLLVIIIILL).

It belongs to the ascovirus HvAV ORF18 family.

It localises to the membrane. This is an uncharacterized protein from Spodoptera frugiperda ascovirus 1a (SfAV-1a).